The sequence spans 212 residues: Fibrillarin-like rRNA/tRNA 2'-O-methyltransferase (212 aa).

S-adenosyl-L-methionine contacts are provided by residues 73-74, 91-92, 116-117, and 136-139; these read TT, EI, DA, and DVAQ.

Belongs to the methyltransferase superfamily. Fibrillarin family. As to quaternary structure, interacts with nop5. Component of box C/D small ribonucleoprotein (sRNP) particles that contain rpl7ae, FlpA and nop5, plus a guide RNA.

Involved in pre-rRNA and tRNA processing. Utilizes the methyl donor S-adenosyl-L-methionine to catalyze the site-specific 2'-hydroxyl methylation of ribose moieties in rRNA and tRNA. Site specificity is provided by a guide RNA that base pairs with the substrate. Methylation occurs at a characteristic distance from the sequence involved in base pairing with the guide RNA. The protein is Fibrillarin-like rRNA/tRNA 2'-O-methyltransferase of Methanothrix thermoacetophila (strain DSM 6194 / JCM 14653 / NBRC 101360 / PT) (Methanosaeta thermophila).